We begin with the raw amino-acid sequence, 424 residues long: Serine--tRNA ligase (424 aa).

231 to 233 (TAE) contributes to the L-serine binding site. 262 to 264 (RSE) contributes to the ATP binding site. Glu285 contacts L-serine. 349 to 352 (EISS) contributes to the ATP binding site. Ser385 contributes to the L-serine binding site.

This sequence belongs to the class-II aminoacyl-tRNA synthetase family. Type-1 seryl-tRNA synthetase subfamily. In terms of assembly, homodimer. The tRNA molecule binds across the dimer.

Its subcellular location is the cytoplasm. It carries out the reaction tRNA(Ser) + L-serine + ATP = L-seryl-tRNA(Ser) + AMP + diphosphate + H(+). The catalysed reaction is tRNA(Sec) + L-serine + ATP = L-seryl-tRNA(Sec) + AMP + diphosphate + H(+). Its pathway is aminoacyl-tRNA biosynthesis; selenocysteinyl-tRNA(Sec) biosynthesis; L-seryl-tRNA(Sec) from L-serine and tRNA(Sec): step 1/1. In terms of biological role, catalyzes the attachment of serine to tRNA(Ser). Is also able to aminoacylate tRNA(Sec) with serine, to form the misacylated tRNA L-seryl-tRNA(Sec), which will be further converted into selenocysteinyl-tRNA(Sec). The polypeptide is Serine--tRNA ligase (Marinobacter nauticus (strain ATCC 700491 / DSM 11845 / VT8) (Marinobacter aquaeolei)).